The sequence spans 106 residues: Putative membrane protein insertion efficiency factor (106 aa).

It belongs to the UPF0161 family.

Its subcellular location is the cell inner membrane. Its function is as follows. Could be involved in insertion of integral membrane proteins into the membrane. The protein is Putative membrane protein insertion efficiency factor of Acinetobacter baumannii (strain SDF).